Here is a 213-residue protein sequence, read N- to C-terminus: Citrate synthase, mitochondrial (213 aa).

H74 is a catalytic residue. N6-acetyllysine; alternate is present on residues K94 and K100. Residues K94 and K100 each carry the N6-succinyllysine; alternate modification. Residue H120 is part of the active site. R129 lines the oxaloacetate pocket. At K148 the chain carries N6-acetyllysine; alternate. N6-succinyllysine; alternate is present on K148. K155 is modified (N6-acetyllysine). N6-acetyllysine; alternate is present on K166. K166 is modified (N6-succinyllysine; alternate). The residue at position 168 (K168) is an N6,N6,N6-trimethyllysine. D175 is an active-site residue. R201 serves as a coordination point for oxaloacetate.

The protein belongs to the citrate synthase family. In terms of assembly, homodimer. In terms of processing, in response to mitochondrial stress, the precursor protein is ubiquitinated by the SIFI complex in the cytoplasm before mitochondrial import, leading to its degradation. Within the SIFI complex, UBR4 initiates ubiquitin chain that are further elongated or branched by KCMF1.

It localises to the mitochondrion matrix. The enzyme catalyses oxaloacetate + acetyl-CoA + H2O = citrate + CoA + H(+). It functions in the pathway carbohydrate metabolism; tricarboxylic acid cycle; isocitrate from oxaloacetate: step 1/2. Its function is as follows. Key enzyme of the Krebs tricarboxylic acid cycle which catalyzes the synthesis of citrate from acetyl coenzyme A and oxaloacetate. This chain is Citrate synthase, mitochondrial, found in Mesocricetus auratus (Golden hamster).